The primary structure comprises 409 residues: MGERRDTTVIVGAGHAGTAAAFFLREFGYHGRVLLLSAETQHPYQRPPLSKEYLLAQHSTPSLLKGKDSYARADIELCLQDDVLSITPASRQVKSSQGSYTYDHLILATGSHPRFMATLGQADNLCYLSDWDDAGRIRQQLGEASRIVVLGGGFIGLEIASSACKMGKHVTVIERAPRLLSRVVSEAFATFIGDIHLGNGIELRLGEEVREVRRCTSGVRVDAVFLSDGQLLECDMLVIGVGSEPRMELATAAGLACASGVLVDEHCHTSDPFISAIGDCVAVCPSPGHQLPRRESVQNATEQARLVAARLSGRPVPPVQTPWFWSDQLQARINLAGERPAQGQVIVRRYGGDKVSMLYLQDQQLVAIEACNMPGDCLLARRAIGQNHSLDLARLVDADVPLKDALHFA.

Residue 7–38 coordinates FAD; that stretch reads TTVIVGAGHAGTAAAFFLREFGYHGRVLLLSA. 151–159 provides a ligand contact to NAD(+); the sequence is GGGFIGLEI.

Requires FAD as cofactor.

Functionally, the oxidation of alpha-terpineol by cytochrome p450-TERP requires the participation of a flavoprotein, terpredoxin reductase, and an iron-sulfur protein, terpredoxin, to mediate the transfer of electrons from NADH to P450 for oxygen activation. The sequence is that of Terpredoxin reductase (terPA) from Pseudomonas sp.